Consider the following 468-residue polypeptide: Zinc finger protein 672 (468 aa).

C2H2-type zinc fingers lie at residues 15 to 37 (YSCS…ERAH), 43 to 65 (FRCL…RWTH), 71 to 93 (YICS…LGTH), and 100 to 123 (CPCR…VRQH). The C2H2-type 5; degenerate zinc-finger motif lies at 129 to 151 (HRCPLCARSFRQSALPFHLARAH). 9 consecutive C2H2-type zinc fingers follow at residues 167 to 189 (YHCT…SRIH), 202 to 224 (HRCG…LQRH), 230 to 252 (FKCP…QRTH), 258 to 280 (YACN…QRSH), 286 to 308 (HICA…QRSH), 314 to 336 (FPCP…LRTH), 342 to 364 (YHCE…LRNH), 370 to 392 (HKCP…RKTH), and 398 to 420 (AECT…QRSH).

It belongs to the krueppel C2H2-type zinc-finger protein family.

The protein localises to the nucleus. Its function is as follows. May be involved in transcriptional regulation. This is Zinc finger protein 672 (Znf672) from Rattus norvegicus (Rat).